Here is a 1405-residue protein sequence, read N- to C-terminus: DNA-directed RNA polymerase subunit beta' (1405 aa).

Residues Cys70, Cys72, Cys85, and Cys88 each coordinate Zn(2+). Mg(2+)-binding residues include Asp460, Asp462, and Asp464. Positions 814, 888, 895, and 898 each coordinate Zn(2+).

Belongs to the RNA polymerase beta' chain family. As to quaternary structure, the RNAP catalytic core consists of 2 alpha, 1 beta, 1 beta' and 1 omega subunit. When a sigma factor is associated with the core the holoenzyme is formed, which can initiate transcription. Mg(2+) serves as cofactor. Zn(2+) is required as a cofactor.

The catalysed reaction is RNA(n) + a ribonucleoside 5'-triphosphate = RNA(n+1) + diphosphate. DNA-dependent RNA polymerase catalyzes the transcription of DNA into RNA using the four ribonucleoside triphosphates as substrates. This chain is DNA-directed RNA polymerase subunit beta', found in Shewanella sp. (strain MR-7).